The sequence spans 513 residues: Serine/threonine-protein kinase pakH (513 aa).

The Protein kinase domain maps to 42–294; the sequence is FEIQEKLGEG…PSQLLDHPFI (253 aa). ATP-binding positions include 48–56 and K71; that span reads LGEGSFGSV. D163 functions as the Proton acceptor in the catalytic mechanism. A disordered region spans residues 313-358; it reads KSKKRKSIGPSVSPKQQPNDNNNNNNNNKPQFLSKLLNNNSNSSND. Residues 331–357 are compositionally biased toward low complexity; that stretch reads NDNNNNNNNNKPQFLSKLLNNNSNSSN. A helical transmembrane segment spans residues 493-512; the sequence is IVLYSTLGLILVLSVFFKFF.

It belongs to the protein kinase superfamily. STE Ser/Thr protein kinase family. STE20 subfamily. The cofactor is Mg(2+).

It localises to the membrane. The enzyme catalyses L-seryl-[protein] + ATP = O-phospho-L-seryl-[protein] + ADP + H(+). It carries out the reaction L-threonyl-[protein] + ATP = O-phospho-L-threonyl-[protein] + ADP + H(+). This is Serine/threonine-protein kinase pakH (pakH-1) from Dictyostelium discoideum (Social amoeba).